We begin with the raw amino-acid sequence, 1342 residues long: MAYSYSEKKRIRKSFGKRPQVLNVPYLLTIQLDSYEKFIQRDSDGQQGLEAAFRSVFPIVSNNGSTELQYVSYELGEPVFDVRECQIRGTTYAAPLRVKLRLVTFDREAAAGTVKDIKEQNVYMGEIPLMTDNGTFVINGTERVIVSQLHRSPGVFFDSDKGKTHSSGKVLYNARIIPYRGSWLDFEFDPKDNLYARIDRRRKLPATIILRALGYTTEEILSMFFDKVNFEIQDNKLLMTLVPERLRGETAAFDIEANGKVYVERGRRITARHIRTLEKDGITQIEVPVEYIVGKVAAKDYVDLSTGEVVCPANMEISMEMLAKLSQAGYKEIEVLFTNDLDHGPYISETLRVDPTYDRLSALVEIYRMMRPGEPPTKEAAEALFDNMFFSADRYDLSAVGRMKFNRSLNLEEGVGSGILSNDDITGVMKKLIEIRNGRGEVDDIDHLGNRRIRSVGEMAENQFRIGLVRVERAVRERLSLGDLDGITPQDLINAKPISAAVKEFFGSSQLSQFMDQNNPLSEVTHKRRISALGPGGLTRERAGFEVRDVHTTHYGRLCPIETPEGPNIGLINSLSVYARTNNYGFLETPFRKVVNGQVTEDIEYLSAIEEGNYVIAQANSNLDENFRFTDTYVTCRGEHGESGLYKPEDIHYMDISTQQVVSVAAALIPFLEHDDANRALMGANMQRQAVPTLRADKPLVGTGMEKPIALDSGVAIVAKRGGIVQRVDASRIVVKVNEDETIPGEAGIDIYNLIKYTRSNQNTCINQIPCVNLGEPVARGEILADGPSTDLGELALGQNIRVAFMPWNGYNFEDSMLVSERVVQEDRFTTIHIQELSCVARDTKLGAEEITADIPNVGESALSKLDESGIVYVGAEVKGGDILVGKVTPKGETQLTPEEKLLRAIFGEKASDVKDSSLRVPNGTSGTVIDVQVFTRDGVEKDKRALEIEEMQLKEAKKDLTEELEILEAGLFTRVRNLLIEGGVSEAELDKVAREKWLEQTLDDEAKQNQLEQLAEQHEELRKEFERKLEIKRNKIIQGDDLAPGVLKVVKVYLAVRRQIQPGDKMAGRHGNKGVISKINPVEDMPYDENGQPVEIVLNPLGVPSRMNIGQILETHLGLAAKGIGDQINAMIKQQQSVAKLREYIQKAYDLGHGSQSVDLSTFTDEEVMRLAENLRKGLPLATPVFDGAHESEIKGLLELGGLPTSGQITLFDGRTGEKFERPVTVGYMYMLKLNHLVDDKMHARSTGSYSLVTQQPLGGKAQFGGQRFGEMEVWALEAYGAAYTLQEMLTVKSDDVNGRTKMYKNIVDGTHQMEPGMPESFNVLLKEIRALGIDMELDEE.

Belongs to the RNA polymerase beta chain family. In terms of assembly, the RNAP catalytic core consists of 2 alpha, 1 beta, 1 beta' and 1 omega subunit. When a sigma factor is associated with the core the holoenzyme is formed, which can initiate transcription.

The enzyme catalyses RNA(n) + a ribonucleoside 5'-triphosphate = RNA(n+1) + diphosphate. DNA-dependent RNA polymerase catalyzes the transcription of DNA into RNA using the four ribonucleoside triphosphates as substrates. The polypeptide is DNA-directed RNA polymerase subunit beta (Actinobacillus pleuropneumoniae serotype 5b (strain L20)).